We begin with the raw amino-acid sequence, 252 residues long: N-acetylglucosaminyl-phosphatidylinositol de-N-acetylase (252 aa).

The helical transmembrane segment at 2–22 threads the bilayer; the sequence is ELVGFLCVAVAVLTWGFLRVW. Residues 23 to 252 lie on the Cytoplasmic side of the membrane; it reads NSAERMRSPE…YMRINSLRFL (230 aa).

The protein belongs to the PIGL family.

The protein resides in the endoplasmic reticulum membrane. The catalysed reaction is a 6-(N-acetyl-alpha-D-glucosaminyl)-1-(1,2-diacyl-sn-glycero-3-phospho)-1D-myo-inositol + H2O = a 6-(alpha-D-glucosaminyl)-1-(1,2-diacyl-sn-glycero-3-phospho)-1D-myo-inositol + acetate. Its pathway is glycolipid biosynthesis; glycosylphosphatidylinositol-anchor biosynthesis. Catalyzes the second step of glycosylphosphatidylinositol (GPI) biosynthesis, which is the de-N-acetylation of N-acetylglucosaminyl-phosphatidylinositol. The polypeptide is N-acetylglucosaminyl-phosphatidylinositol de-N-acetylase (Pigl) (Mus musculus (Mouse)).